A 128-amino-acid polypeptide reads, in one-letter code: Holo-[acyl-carrier-protein] synthase (128 aa).

Residues D8 and E58 each coordinate Mg(2+).

This sequence belongs to the P-Pant transferase superfamily. AcpS family. Mg(2+) serves as cofactor.

It localises to the cytoplasm. It carries out the reaction apo-[ACP] + CoA = holo-[ACP] + adenosine 3',5'-bisphosphate + H(+). Transfers the 4'-phosphopantetheine moiety from coenzyme A to a Ser of acyl-carrier-protein. In Alkalilimnicola ehrlichii (strain ATCC BAA-1101 / DSM 17681 / MLHE-1), this protein is Holo-[acyl-carrier-protein] synthase.